We begin with the raw amino-acid sequence, 694 residues long: Elongation factor G (694 aa).

Residues 8 to 287 enclose the tr-type G domain; sequence EDYRNFGIMA…AVVEFLPAPT (280 aa). GTP contacts are provided by residues 17–24, 86–90, and 140–143; these read AHIDAGKT, DTPGH, and NKMD.

Belongs to the TRAFAC class translation factor GTPase superfamily. Classic translation factor GTPase family. EF-G/EF-2 subfamily.

The protein localises to the cytoplasm. Functionally, catalyzes the GTP-dependent ribosomal translocation step during translation elongation. During this step, the ribosome changes from the pre-translocational (PRE) to the post-translocational (POST) state as the newly formed A-site-bound peptidyl-tRNA and P-site-bound deacylated tRNA move to the P and E sites, respectively. Catalyzes the coordinated movement of the two tRNA molecules, the mRNA and conformational changes in the ribosome. The polypeptide is Elongation factor G (Brucella abortus (strain S19)).